We begin with the raw amino-acid sequence, 750 residues long: E3 ubiquitin-protein ligase rfwd3.S (750 aa).

Residues 92 to 206 (RQAAEQRSSV…GAAPPAEPAP (115 aa)) are disordered. A compositionally biased stretch (basic residues) spans 105-116 (RVQRRSTRRHQR). Residues 122-144 (TAGTSSRAALSNFFQINRTQGVA) show a composition bias toward polar residues. Residues 168-181 (SSDETVELSEEEEG) are compositionally biased toward acidic residues. The RING-type; degenerate zinc finger occupies 263–307 (CAICFEPWTNAGQHRLSALRCGHLFGFTCIERWLKGGAAKCPQCN). Over residues 387 to 405 (TSMQASSSRSTISGSLSSS) the composition is skewed to low complexity. Positions 387-406 (TSMQASSSRSTISGSLSSSQ) are disordered. WD repeat units follow at residues 470–510 (IHSK…VVQT), 512–552 (NTGR…NCVQ), and 558–603 (GSRC…YRPH).

The cofactor is [4Fe-4S] cluster.

The protein localises to the nucleus. The protein resides in the PML body. It is found in the cytoplasm. It carries out the reaction S-ubiquitinyl-[E2 ubiquitin-conjugating enzyme]-L-cysteine + [acceptor protein]-L-lysine = [E2 ubiquitin-conjugating enzyme]-L-cysteine + N(6)-ubiquitinyl-[acceptor protein]-L-lysine.. The protein operates within protein modification; protein ubiquitination. Functionally, E3 ubiquitin-protein ligase required for the repair of DNA interstrand cross-links (ICL) in response to DNA damage. Plays a key role in RPA-mediated DNA damage signaling and repair. Required to translesion DNA synthesis across DNA-protein cross-link adducts by catalyzing ubiquitination of proteins on single-stranded DNA (ssDNA). Mediates ubiquitination of the hmces DNA-protein cross-link, possibly promoting its degradation. This is E3 ubiquitin-protein ligase rfwd3.S (rfwd3.S) from Xenopus laevis (African clawed frog).